Reading from the N-terminus, the 112-residue chain is Large ribosomal subunit protein uL22 (112 aa).

It belongs to the universal ribosomal protein uL22 family. In terms of assembly, part of the 50S ribosomal subunit.

This protein binds specifically to 23S rRNA; its binding is stimulated by other ribosomal proteins, e.g. L4, L17, and L20. It is important during the early stages of 50S assembly. It makes multiple contacts with different domains of the 23S rRNA in the assembled 50S subunit and ribosome. Functionally, the globular domain of the protein is located near the polypeptide exit tunnel on the outside of the subunit, while an extended beta-hairpin is found that lines the wall of the exit tunnel in the center of the 70S ribosome. This is Large ribosomal subunit protein uL22 from Nitratidesulfovibrio vulgaris (strain ATCC 29579 / DSM 644 / CCUG 34227 / NCIMB 8303 / VKM B-1760 / Hildenborough) (Desulfovibrio vulgaris).